A 740-amino-acid polypeptide reads, in one-letter code: ATP-dependent RNA helicase DDX1 (740 aa).

The interaction with dsRNA stretch occupies residues 1–448; sequence MAAFSEMGVM…ETVHHVVVIV (448 aa). Residues 2 to 428 enclose the Helicase ATP-binding domain; the sequence is AAFSEMGVMP…SEKIMHFPTW (427 aa). An ATP-binding site is contributed by 46-53; the sequence is AETGSGKT. Positions 70–247 constitute a B30.2/SPRY domain; that stretch reads DQMEGKKGKA…LKFNFGEEDF (178 aa). The short motif at 370–373 is the DEAD box element; it reads DEAD. Residues 493-681 enclose the Helicase C-terminal domain; the sequence is KGEYTVRAIK…QVEPDIKVPV (189 aa).

The protein belongs to the DEAD box helicase family. DDX1 subfamily. As to expression, detected in embryonic retina, brain, heart and liver (at protein level). Detected in embryonic retina, brain, heart, kidney and liver.

It localises to the nucleus. It is found in the cytoplasm. The protein localises to the cytoplasmic granule. The protein resides in the cytosol. Its subcellular location is the mitochondrion. It catalyses the reaction ATP + H2O = ADP + phosphate + H(+). Acts as an ATP-dependent RNA helicase, able to unwind both RNA-RNA and RNA-DNA duplexes. Possesses 5' single-stranded RNA overhang nuclease activity. Acts as a positive regulator of transcription. May be involved in 3'-end cleavage and polyadenylation of pre-mRNAs. Binds DNA and RNA. Component of the tRNA-splicing ligase complex required to facilitate the enzymatic turnover of catalytic subunit RTCB. Binds (via helicase ATP-binding domain) on both short and long poly(I:C) dsRNA. This chain is ATP-dependent RNA helicase DDX1 (DDX1), found in Gallus gallus (Chicken).